The chain runs to 398 residues: Putative glutamate--cysteine ligase 2 (398 aa).

It belongs to the glutamate--cysteine ligase type 2 family. YbdK subfamily.

It catalyses the reaction L-cysteine + L-glutamate + ATP = gamma-L-glutamyl-L-cysteine + ADP + phosphate + H(+). ATP-dependent carboxylate-amine ligase which exhibits weak glutamate--cysteine ligase activity. This is Putative glutamate--cysteine ligase 2 from Micrococcus luteus (strain ATCC 4698 / DSM 20030 / JCM 1464 / CCM 169 / CCUG 5858 / IAM 1056 / NBRC 3333 / NCIMB 9278 / NCTC 2665 / VKM Ac-2230) (Micrococcus lysodeikticus).